The sequence spans 88 residues: Sec-independent protein translocase protein TatA (88 aa).

The chain crosses the membrane as a helical span at residues 1-21 (MGGISITQLLIIASIVVVLFG). A disordered region spans residues 39-88 (FKKSMSEDDNTTSTSSDKSSQDADFTAPPIEPKANLACPDEAKNKDKEHV). A compositionally biased stretch (low complexity) spans 49–62 (TTSTSSDKSSQDAD). The segment covering 78–88 (DEAKNKDKEHV) has biased composition (basic and acidic residues).

The protein belongs to the TatA/E family. As to quaternary structure, the Tat system comprises two distinct complexes: a TatABC complex, containing multiple copies of TatA, TatB and TatC subunits, and a separate TatA complex, containing only TatA subunits. Substrates initially bind to the TatABC complex, which probably triggers association of the separate TatA complex to form the active translocon.

It is found in the cell inner membrane. Part of the twin-arginine translocation (Tat) system that transports large folded proteins containing a characteristic twin-arginine motif in their signal peptide across membranes. TatA could form the protein-conducting channel of the Tat system. The chain is Sec-independent protein translocase protein TatA from Sodalis glossinidius (strain morsitans).